Reading from the N-terminus, the 247-residue chain is Small ribosomal subunit protein uS2 (247 aa).

It belongs to the universal ribosomal protein uS2 family.

This is Small ribosomal subunit protein uS2 from Pseudomonas savastanoi pv. phaseolicola (strain 1448A / Race 6) (Pseudomonas syringae pv. phaseolicola (strain 1448A / Race 6)).